The sequence spans 507 residues: Xylose import ATP-binding protein XylG (507 aa).

ABC transporter domains lie at 5-242 (LKMT…VGRE) and 259-504 (LEVK…LSEK). 37 to 44 (GENGSGKS) contacts ATP.

This sequence belongs to the ABC transporter superfamily. Xylose importer (TC 3.A.1.2.4) family. In terms of assembly, the complex is composed of two ATP-binding proteins (XylG), two transmembrane proteins (XylH) and a solute-binding protein (XylF).

It localises to the cell inner membrane. The catalysed reaction is D-xylose(out) + ATP + H2O = D-xylose(in) + ADP + phosphate + H(+). Functionally, part of the ABC transporter complex XylFGH involved in xylose import. Responsible for energy coupling to the transport system. The sequence is that of Xylose import ATP-binding protein XylG from Photobacterium profundum (strain SS9).